Consider the following 396-residue polypeptide: S-adenosylmethionine synthase (396 aa).

H16 contacts ATP. D18 is a binding site for Mg(2+). Residue E44 coordinates K(+). E57 and Q100 together coordinate L-methionine. Positions 100-110 (QSPDIAQGVDR) are flexible loop. Residues 167 to 169 (DAK), 233 to 234 (RF), D242, 248 to 249 (RK), A265, and K269 each bind ATP. Residue D242 participates in L-methionine binding. K273 provides a ligand contact to L-methionine.

It belongs to the AdoMet synthase family. In terms of assembly, homotetramer; dimer of dimers. It depends on Mg(2+) as a cofactor. The cofactor is K(+).

The protein localises to the cytoplasm. It catalyses the reaction L-methionine + ATP + H2O = S-adenosyl-L-methionine + phosphate + diphosphate. It participates in amino-acid biosynthesis; S-adenosyl-L-methionine biosynthesis; S-adenosyl-L-methionine from L-methionine: step 1/1. Functionally, catalyzes the formation of S-adenosylmethionine (AdoMet) from methionine and ATP. The overall synthetic reaction is composed of two sequential steps, AdoMet formation and the subsequent tripolyphosphate hydrolysis which occurs prior to release of AdoMet from the enzyme. This Paraburkholderia xenovorans (strain LB400) protein is S-adenosylmethionine synthase.